A 138-amino-acid chain; its full sequence is Large ribosomal subunit protein uL16c (138 aa).

Belongs to the universal ribosomal protein uL16 family. Part of the 50S ribosomal subunit.

The protein resides in the plastid. It localises to the chloroplast. This chain is Large ribosomal subunit protein uL16c, found in Physcomitrium patens (Spreading-leaved earth moss).